Here is a 445-residue protein sequence, read N- to C-terminus: E3 ubiquitin-protein ligase MYLIP (445 aa).

Positions 1 to 279 (MLCYVTRPDA…ETHAFYRCDT (279 aa)) constitute an FERM domain. Fe cation is bound by residues Cys-360, Cys-363, and Cys-368. The RING-type zinc finger occupies 387-422 (CMVCCEEEINSTFCPCGHTVCCESCAAQLQSCPVCR). Positions 431 to 433 (VYL) are critical for homodimerization.

Homodimer. Interacts with the E2 ubiquitin-conjugating enzyme, UBE2D1 (via RING-type zinc finger). Interacts with myosin regulatory light chain (MRLC) and TMEM4. In terms of processing, autoubiquitinated. In terms of tissue distribution, ubiquitously expressed.

The protein localises to the cytoplasm. It is found in the cell membrane. It catalyses the reaction S-ubiquitinyl-[E2 ubiquitin-conjugating enzyme]-L-cysteine + [acceptor protein]-L-lysine = [E2 ubiquitin-conjugating enzyme]-L-cysteine + N(6)-ubiquitinyl-[acceptor protein]-L-lysine.. It functions in the pathway protein modification; protein ubiquitination. Can bind 1 iron ion per dimer. Iron binding seems to decrease LDLR degradation activity. Its function is as follows. E3 ubiquitin-protein ligase that mediates ubiquitination and subsequent proteasomal degradation of myosin regulatory light chain (MRLC), LDLR, VLDLR and LRP8. Activity depends on E2 enzymes of the UBE2D family. Proteasomal degradation of MRLC leads to inhibit neurite outgrowth in presence of NGF by counteracting the stabilization of MRLC by saposin-like protein (CNPY2/MSAP) and reducing CNPY2-stimulated neurite outgrowth. Acts as a sterol-dependent inhibitor of cellular cholesterol uptake by mediating ubiquitination and subsequent degradation of LDLR. The chain is E3 ubiquitin-protein ligase MYLIP (MYLIP) from Homo sapiens (Human).